Here is a 269-residue protein sequence, read N- to C-terminus: Shikimate dehydrogenase (NADP(+)) (269 aa).

Residues 17-19 (SKS) and Thr-64 each bind shikimate. Lys-68 (proton acceptor) is an active-site residue. Asp-80 lines the NADP(+) pocket. Positions 89 and 105 each coordinate shikimate. NADP(+) is bound by residues 130-134 (GAGGA), 154-159 (NRTRAK), and Met-213. Residue Tyr-215 coordinates shikimate. NADP(+) is bound at residue Gly-237.

It belongs to the shikimate dehydrogenase family. In terms of assembly, homodimer.

The catalysed reaction is shikimate + NADP(+) = 3-dehydroshikimate + NADPH + H(+). It participates in metabolic intermediate biosynthesis; chorismate biosynthesis; chorismate from D-erythrose 4-phosphate and phosphoenolpyruvate: step 4/7. Involved in the biosynthesis of the chorismate, which leads to the biosynthesis of aromatic amino acids. Catalyzes the reversible NADPH linked reduction of 3-dehydroshikimate (DHSA) to yield shikimate (SA). The polypeptide is Shikimate dehydrogenase (NADP(+)) (Neisseria meningitidis serogroup C (strain 053442)).